We begin with the raw amino-acid sequence, 242 residues long: Transcriptional activator protein RaiR (242 aa).

Residues 177 to 242 (KVADLPRLSR…EQLLGPRRSN (66 aa)) enclose the HTH luxR-type domain. A DNA-binding region (H-T-H motif) is located at residues 201 to 220 (AKQICARLSISVSAVQLYLA).

It belongs to the autoinducer-regulated transcriptional regulatory protein family.

The sequence is that of Transcriptional activator protein RaiR (raiR) from Rhizobium etli.